The chain runs to 152 residues: ASP external chaperone (152 aa).

Positions 1-22 (MNKPVTLLLATLLAPLSGQLCA) are cleaved as a signal peptide.

In terms of assembly, forms a complex with the serine protease ASP in the periplasm. After translocation of the ASP-ORF2 complex from the periplasm to the extracellular space, the complex is dissociated in a pH-dependent manner.

It is found in the periplasm. The protein localises to the secreted. With respect to regulation, degraded by ASP after secretion and dissociation of the ASP-ORF2 complex. Its function is as follows. Required for the production of the active form of the Aeromonas extracellular serine protease (ASP). Acts as a chaperone that helps ASP form an active structure in the periplasm. Formation of a complex with ASP in the periplasm also inactivates the protease activity and likely protects ASP from intrinsic proteases. Dissociation of the ASP-ORF2 complex after secretion in the extracellular space generates an active ASP. This is ASP external chaperone from Aeromonas sobria.